The following is a 431-amino-acid chain: Maintenance of mitochondrial morphology protein 1 (431 aa).

Residues 1–103 (MVSALEVKSI…QLISWSFAQG (103 aa)) lie on the Lumenal side of the membrane. A helical transmembrane segment spans residues 104-124 (LIIGQLSVVIFLIFFVKFFIF). Over 125 to 431 (TDASSKMDNP…EDESSKTPHS (307 aa)) the chain is Cytoplasmic. One can recognise an SMP-LTD domain in the interval 192 to 404 (SAESLDWFNV…EPRFQSVKLP (213 aa)). A disordered region spans residues 412–431 (NTREEVIHKTEDESSKTPHS).

This sequence belongs to the MMM1 family. As to quaternary structure, homodimer. Component of the ER-mitochondria encounter structure (ERMES) or MDM complex, composed of MMM1, MDM10, MDM12 and MDM34. An MMM1 homodimer associates with one molecule of MDM12 on each side in a pairwise head-to-tail manner, and the SMP-LTD domains of MMM1 and MDM12 generate a continuous hydrophobic tunnel for phospholipid trafficking.

The protein resides in the endoplasmic reticulum membrane. Functionally, component of the ERMES/MDM complex, which serves as a molecular tether to connect the endoplasmic reticulum (ER) and mitochondria. Components of this complex are involved in the control of mitochondrial shape and protein biogenesis, and function in nonvesicular lipid trafficking between the ER and mitochondria. The MDM12-MMM1 subcomplex functions in the major beta-barrel assembly pathway that is responsible for biogenesis of all outer membrane beta-barrel proteins, and acts in a late step after the SAM complex. The MDM10-MDM12-MMM1 subcomplex further acts in the TOM40-specific pathway after the action of the MDM12-MMM1 complex. Essential for establishing and maintaining the structure of mitochondria and maintenance of mtDNA nucleoids. The protein is Maintenance of mitochondrial morphology protein 1 of Candida glabrata (strain ATCC 2001 / BCRC 20586 / JCM 3761 / NBRC 0622 / NRRL Y-65 / CBS 138) (Yeast).